The following is a 239-amino-acid chain: DNA repair protein RecO (239 aa).

Belongs to the RecO family.

Involved in DNA repair and RecF pathway recombination. This chain is DNA repair protein RecO, found in Cereibacter sphaeroides (strain KD131 / KCTC 12085) (Rhodobacter sphaeroides).